Here is a 644-residue protein sequence, read N- to C-terminus: DNA gyrase subunit B (644 aa).

The region spanning C429 to P543 is the Toprim domain. Mg(2+) contacts are provided by E435, D508, and D510.

It belongs to the type II topoisomerase GyrB family. As to quaternary structure, heterotetramer, composed of two GyrA and two GyrB chains. In the heterotetramer, GyrA contains the active site tyrosine that forms a transient covalent intermediate with DNA, while GyrB binds cofactors and catalyzes ATP hydrolysis. Mg(2+) serves as cofactor. Mn(2+) is required as a cofactor. Requires Ca(2+) as cofactor.

The protein localises to the cytoplasm. The enzyme catalyses ATP-dependent breakage, passage and rejoining of double-stranded DNA.. Functionally, a type II topoisomerase that negatively supercoils closed circular double-stranded (ds) DNA in an ATP-dependent manner to modulate DNA topology and maintain chromosomes in an underwound state. Negative supercoiling favors strand separation, and DNA replication, transcription, recombination and repair, all of which involve strand separation. Also able to catalyze the interconversion of other topological isomers of dsDNA rings, including catenanes and knotted rings. Type II topoisomerases break and join 2 DNA strands simultaneously in an ATP-dependent manner. This is DNA gyrase subunit B from Staphylococcus aureus (strain USA300).